A 299-amino-acid chain; its full sequence is Superkiller complex protein 8 (299 aa).

WD repeat units follow at residues 11 to 48 (AHED…FLTE), 54 to 93 (KHIL…LHKT), 96 to 135 (SGPL…KLRS), 138 to 177 (NTNK…RVSE), 180 to 219 (AHGV…PYIA), 223 to 263 (GHSS…LDSS), and 266 to 299 (AHAD…ALKQ).

The protein belongs to the SKI8 family.

The sequence is that of Superkiller complex protein 8 (skic8) from Dictyostelium discoideum (Social amoeba).